Consider the following 310-residue polypeptide: Putative methyltransferase mtx subunit H (310 aa).

This sequence belongs to the MtrH family. May be part of a complex composed of 3 subunits; MtxA, MtxH and MtxX.

This Methanosarcina acetivorans (strain ATCC 35395 / DSM 2834 / JCM 12185 / C2A) protein is Putative methyltransferase mtx subunit H (mtxH).